Consider the following 227-residue polypeptide: Lipoprotein-releasing system ATP-binding protein LolD (227 aa).

Positions 7–227 (LRLERIGRAY…TLKDGRVVDL (221 aa)) constitute an ABC transporter domain. Position 43-50 (43-50 (APSGAGKS)) interacts with ATP.

The protein belongs to the ABC transporter superfamily. Lipoprotein translocase (TC 3.A.1.125) family. In terms of assembly, the complex is composed of two ATP-binding proteins (LolD) and two transmembrane proteins (LolC and LolE).

The protein localises to the cell inner membrane. Its function is as follows. Part of the ABC transporter complex LolCDE involved in the translocation of mature outer membrane-directed lipoproteins, from the inner membrane to the periplasmic chaperone, LolA. Responsible for the formation of the LolA-lipoprotein complex in an ATP-dependent manner. The sequence is that of Lipoprotein-releasing system ATP-binding protein LolD from Brucella abortus biovar 1 (strain 9-941).